We begin with the raw amino-acid sequence, 202 residues long: Probable nicotinate-nucleotide adenylyltransferase (202 aa).

Belongs to the NadD family.

It catalyses the reaction nicotinate beta-D-ribonucleotide + ATP + H(+) = deamido-NAD(+) + diphosphate. It functions in the pathway cofactor biosynthesis; NAD(+) biosynthesis; deamido-NAD(+) from nicotinate D-ribonucleotide: step 1/1. In terms of biological role, catalyzes the reversible adenylation of nicotinate mononucleotide (NaMN) to nicotinic acid adenine dinucleotide (NaAD). The sequence is that of Probable nicotinate-nucleotide adenylyltransferase from Bacteroides thetaiotaomicron (strain ATCC 29148 / DSM 2079 / JCM 5827 / CCUG 10774 / NCTC 10582 / VPI-5482 / E50).